The sequence spans 154 residues: Myoglobin (154 aa).

The Globin domain occupies 2-148 (VLSEGEWQLV…FRKDIAAKYK (147 aa)). Position 4 is a phosphoserine (Ser-4). His-65 lines the nitrite pocket. Residue His-65 participates in O2 binding. At Thr-68 the chain carries Phosphothreonine. His-94 provides a ligand contact to heme b.

The protein belongs to the globin family. As to quaternary structure, monomeric.

It localises to the cytoplasm. It is found in the sarcoplasm. It catalyses the reaction Fe(III)-heme b-[protein] + nitric oxide + H2O = Fe(II)-heme b-[protein] + nitrite + 2 H(+). The enzyme catalyses H2O2 + AH2 = A + 2 H2O. Monomeric heme protein which primary function is to store oxygen and facilitate its diffusion within muscle tissues. Reversibly binds oxygen through a pentacoordinated heme iron and enables its timely and efficient release as needed during periods of heightened demand. Depending on the oxidative conditions of tissues and cells, and in addition to its ability to bind oxygen, it also has a nitrite reductase activity whereby it regulates the production of bioactive nitric oxide. Under stress conditions, like hypoxia and anoxia, it also protects cells against reactive oxygen species thanks to its pseudoperoxidase activity. The chain is Myoglobin (MB) from Kogia breviceps (Pygmy sperm whale).